A 690-amino-acid chain; its full sequence is Protein arginine N-methyltransferase 7 (690 aa).

2 consecutive SAM-dependent MTase PRMT-type domains span residues 14 to 357 (QNSW…YSLW) and 366 to 690 (TKSV…QKKL).

Belongs to the class I-like SAM-binding methyltransferase superfamily. Protein arginine N-methyltransferase family. PRMT7 subfamily.

In terms of biological role, essential arginine methyltransferase that can both catalyze the formation of omega-N monomethylarginine (MMA) and symmetrical dimethylarginine (sDMA). Specifically mediates the symmetrical dimethylation of arginine residues in the small nuclear ribonucleoproteins SmD1 and SmD3. The polypeptide is Protein arginine N-methyltransferase 7 (Art7) (Drosophila yakuba (Fruit fly)).